The chain runs to 314 residues: MRMEAGEAAPPAGAGGRAAGGWGKWVRLNVGGTVFLTTRQTLCREQKSFLSRLCQGEELQSDRDETGAYLIDRDPTYFGPILNFLRHGKLVLDKDMAEEGVLEEAEFYNIGPLIRIIKDRMEEKDYTVTQVPPKHVYRVLQCQEEELTQMVSTMSDGWRFEQLVNIGSSYNYGSEDQAEFLCVVSKELHSTPNGLSSESSRKTKSTEEQLEEQQQQEEEVEEVEVEQVQVEADAQEKAQSSQDPANLFSLPPLPPPPLPAGGSRPHPLRPEAELAVRASPRPLARPQSCHPCCYKPEAPGCEAPDHLQGLGVPI.

A BTB domain is found at 24–94 (KWVRLNVGGT…LRHGKLVLDK (71 aa)). Residues 190–268 (STPNGLSSES…PAGGSRPHPL (79 aa)) form a disordered region. Positions 196–239 (SSESSRKTKSTEEQLEEQQQQEEEVEEVEVEQVQVEADAQEKAQ) form a coiled coil. Positions 208-225 (EQLEEQQQQEEEVEEVEV) are enriched in acidic residues.

In terms of assembly, homopentamer; forms a closed pentamer. Interacts with CUL3; interaction is direct and forms a 5:5 heterodecamer. Interacts with TCHP. Interacts with CUL3, as part of the BCR(KCTD17) E3 ubiquitin ligase complex, at least composed of CUL3, KCTD17 and RBX1. In terms of tissue distribution, highly expressed in brain. Highest expression is observed in the putamen and the thalamus.

It localises to the cytoplasm. In terms of biological role, substrate-adapter for CUL3-RING ubiquitin ligase complexes which mediates the ubiquitination and subsequent proteasomal degradation of TCHP, a protein involved in ciliogenesis down-regulation. Thereby, positively regulates ciliogenesis, playing a crucial role in the initial steps of axoneme extension. May also play a role in endoplasmic reticulum calcium ion homeostasis. In Homo sapiens (Human), this protein is BTB/POZ domain-containing protein KCTD17.